A 39-amino-acid polypeptide reads, in one-letter code: uncharacterized protein (39 aa).

This is an uncharacterized protein from Saccharomyces cerevisiae (strain ATCC 204508 / S288c) (Baker's yeast).